We begin with the raw amino-acid sequence, 250 residues long: MQREEKQMDMLLEAVLNRLNDLKHSIGAMIHRLETEYETINWPTFLDNFALISGHLTGLSKILSSEIGTPLRNLTVLPLLLTPERDEALLQLTEGRIPIFSHDLVPDYLRTKPDPGAESRMAAHEAKANNLQPDTAAKQVAQYNKVISHVWDIVSKAREEWDTEASSRPGIQQTSSLADTQALVAAVGVGNGLTMPVGPGGVPNAGIMIPPAIRQASPMSAVSPGAGPLGKMPSGIKTNIKSANQVHPYR.

The segment at serine 217 to arginine 250 is disordered. Residues isoleucine 236–arginine 250 show a composition bias toward polar residues.

The protein belongs to the Mediator complex subunit 8 family. As to quaternary structure, component of the Mediator complex.

Its subcellular location is the nucleus. Functionally, component of the Mediator complex, a coactivator involved in the regulated transcription of nearly all RNA polymerase II-dependent genes. Mediator functions as a bridge to convey information from gene-specific regulatory proteins to the basal RNA polymerase II transcription machinery. Mediator is recruited to promoters by direct interactions with regulatory proteins and serves as a scaffold for the assembly of a functional preinitiation complex with RNA polymerase II and the general transcription factors. The chain is Mediator of RNA polymerase II transcription subunit 8 (MED8) from Aedes aegypti (Yellowfever mosquito).